The primary structure comprises 605 residues: Phosphoenolpyruvate carboxykinase (ATP) (605 aa).

The span at 27-48 (SGPSSSFINNNNSNNNNNKSSN) shows a compositional bias: low complexity. The interval 27–67 (SGPSSSFINNNNSNNNNNKSSNMFNHDHVNKTNLHPGGVKP) is disordered. Residue 307–314 (GLSGTGKT) coordinates ATP.

The protein belongs to the phosphoenolpyruvate carboxykinase (ATP) family.

The catalysed reaction is oxaloacetate + ATP = phosphoenolpyruvate + ADP + CO2. It functions in the pathway carbohydrate biosynthesis; gluconeogenesis. In Neurospora crassa (strain ATCC 24698 / 74-OR23-1A / CBS 708.71 / DSM 1257 / FGSC 987), this protein is Phosphoenolpyruvate carboxykinase (ATP) (acu-6).